Consider the following 322-residue polypeptide: Probable heme-iron transport system permease protein IsdF (322 aa).

A run of 9 helical transmembrane segments spans residues 9–29 (LLFL…FVTG), 61–81 (ILIA…LQAA), 89–109 (ANII…MLFI), 114–134 (FYLP…IILL), 143–163 (VSMI…LEIL), 179–199 (IWSD…LTLL), 233–253 (VFLA…GIIV), 267–287 (VLIP…DLLG), and 294–314 (LEIP…IYLI).

This sequence belongs to the binding-protein-dependent transport system permease family. FecCD subfamily.

The protein resides in the cell membrane. Part of the binding-protein-dependent transport system for heme-iron. Responsible for the translocation of the substrate across the membrane. In Staphylococcus aureus (strain MSSA476), this protein is Probable heme-iron transport system permease protein IsdF (isdF).